We begin with the raw amino-acid sequence, 162 residues long: Large ribosomal subunit protein uL15 (162 aa).

The span at 1–13 (MNLNELRDNEGSR) shows a compositional bias: basic and acidic residues. The segment at 1–39 (MNLNELRDNEGSRYRKKRLGRGIGSGKGKTSGRGVKGQK) is disordered. A compositionally biased stretch (gly residues) spans 21–35 (RGIGSGKGKTSGRGV).

Belongs to the universal ribosomal protein uL15 family. In terms of assembly, part of the 50S ribosomal subunit.

In terms of biological role, binds to the 23S rRNA. The protein is Large ribosomal subunit protein uL15 of Gluconobacter oxydans (strain 621H) (Gluconobacter suboxydans).